A 335-amino-acid polypeptide reads, in one-letter code: tRNA N6-adenosine threonylcarbamoyltransferase (335 aa).

A divalent metal cation-binding residues include histidine 109, histidine 113, and tyrosine 130. Residues 130–134 (YVSGG), aspartate 162, glycine 177, glutamate 181, and asparagine 266 each bind substrate. Position 294 (aspartate 294) interacts with a divalent metal cation.

It belongs to the KAE1 / TsaD family. Component of the EKC/KEOPS complex composed of at least GON7, TP53RK, TPRKB, OSGEP and LAGE3; the whole complex dimerizes. Requires a divalent metal cation as cofactor.

Its subcellular location is the cytoplasm. It is found in the nucleus. The enzyme catalyses L-threonylcarbamoyladenylate + adenosine(37) in tRNA = N(6)-L-threonylcarbamoyladenosine(37) in tRNA + AMP + H(+). Its function is as follows. Component of the EKC/KEOPS complex that is required for the formation of a threonylcarbamoyl group on adenosine at position 37 (t(6)A37) in tRNAs that read codons beginning with adenine. The complex is probably involved in the transfer of the threonylcarbamoyl moiety of threonylcarbamoyl-AMP (TC-AMP) to the N6 group of A37. OSGEP likely plays a direct catalytic role in this reaction, but requires other protein(s) of the complex to fulfill this activity. This is tRNA N6-adenosine threonylcarbamoyltransferase (Osgep) from Rattus norvegicus (Rat).